Reading from the N-terminus, the 438-residue chain is Xylose isomerase (438 aa).

Mg(2+) contacts are provided by Asp-306 and Asp-308.

Belongs to the xylose isomerase family. Homotetramer. The cofactor is Mg(2+).

It is found in the cytoplasm. It carries out the reaction alpha-D-xylose = alpha-D-xylulofuranose. The sequence is that of Xylose isomerase from Pseudomonas fluorescens (strain SBW25).